Reading from the N-terminus, the 65-residue chain is MRVVLRLPERKEVEVKGNRPLREVLEELGLNPETVVAVRGEELLTLEDEVREEDTLEVLSAISGG.

Gly-65 carries the post-translational modification 1-thioglycine; alternate. Gly-65 carries the post-translational modification Glycyl adenylate; alternate. Residue Gly-65 forms a Glycyl cysteine thioester (Gly-Cys) (interchain with C-192 in TtuC); alternate linkage. A Glycyl lysine isopeptide (Gly-Lys) (interchain with K-? in acceptor proteins); alternate cross-link involves residue Gly-65.

This sequence belongs to the TtuB family. In terms of assembly, is able to form a heterocomplex with TtuA. The C-terminal glycine residue of TtuB is first activated by TtuC as an acyl-adenylate (TtuB-COAMP), and then converted to the thiocarboxylate form (TtuB-COSH) by the cysteine desulfurases IscS or SufS.

It functions in the pathway tRNA modification. Its function is as follows. Required for the 2-thiolation of 5-methyluridine residue at position 54 in the T loop of tRNAs, leading to 5-methyl-2-thiouridine (m(5)s(2)U or s(2)T). This modification allows thermal stabilization of tRNAs in thermophilic microorganisms, and is essential for cell growth at high temperatures. Thiocarboxylated TtuB functions as the sulfur donor in the sulfurtransferase reaction catalyzed by TtuA. TtuB also functions as a protein modifier covalently attached to lysine residues of the target proteins TtuA and TtuC. TtuB conjugation might play a regulatory role to ensure appropriate sulfur transfer in cells. This chain is Sulfur carrier protein TtuB, found in Thermus thermophilus (strain ATCC BAA-163 / DSM 7039 / HB27).